The sequence spans 27 residues: Pyruvate dehydrogenase protein X component, mitochondrial (27 aa).

A disordered region spans residues 1–27 (FRLSPAARNILEKHSLDASQGTATGPR). The 26-residue stretch at 2–27 (RLSPAARNILEKHSLDASQGTATGPR) folds into the Peripheral subunit-binding (PSBD) domain. Lys13 carries the post-translational modification N6-acetyllysine. Ser15 bears the Phosphoserine mark. The span at 17–27 (DASQGTATGPR) shows a compositional bias: polar residues.

It belongs to the 2-oxoacid dehydrogenase family. Part of the inner core of the multimeric pyruvate dehydrogenase complex that is composed of about 48 DLAT and 12 PDHX molecules. This core binds multiple copies of pyruvate dehydrogenase (subunits PDH1A and PDHB, E1), dihydrolipoamide acetyltransferase (DLAT, E2) and lipoamide dehydrogenase (DLD, E3). Interacts with SIRT4. Interacts with DLD.

It localises to the mitochondrion matrix. Required for anchoring dihydrolipoamide dehydrogenase (E3) to the dihydrolipoamide transacetylase (E2) core of the pyruvate dehydrogenase complexes of eukaryotes. This specific binding is essential for a functional PDH complex. This chain is Pyruvate dehydrogenase protein X component, mitochondrial, found in Mesocricetus auratus (Golden hamster).